Consider the following 189-residue polypeptide: UPF0301 protein RC0043 (189 aa).

It belongs to the UPF0301 (AlgH) family.

This Rickettsia conorii (strain ATCC VR-613 / Malish 7) protein is UPF0301 protein RC0043.